Here is a 276-residue protein sequence, read N- to C-terminus: Putative pyruvate, phosphate dikinase regulatory protein (276 aa).

Residue G154 to S161 coordinates ADP.

The protein belongs to the pyruvate, phosphate/water dikinase regulatory protein family. PDRP subfamily.

It carries out the reaction N(tele)-phospho-L-histidyl/L-threonyl-[pyruvate, phosphate dikinase] + ADP = N(tele)-phospho-L-histidyl/O-phospho-L-threonyl-[pyruvate, phosphate dikinase] + AMP + H(+). The catalysed reaction is N(tele)-phospho-L-histidyl/O-phospho-L-threonyl-[pyruvate, phosphate dikinase] + phosphate + H(+) = N(tele)-phospho-L-histidyl/L-threonyl-[pyruvate, phosphate dikinase] + diphosphate. Its function is as follows. Bifunctional serine/threonine kinase and phosphorylase involved in the regulation of the pyruvate, phosphate dikinase (PPDK) by catalyzing its phosphorylation/dephosphorylation. The polypeptide is Putative pyruvate, phosphate dikinase regulatory protein (Wolbachia pipientis wMel).